The primary structure comprises 341 residues: Glycerol-3-phosphate dehydrogenase [NAD(P)+] (341 aa).

The NADPH site is built by Ser-12, Trp-13, Arg-33, and Lys-107. Positions 107, 134, and 136 each coordinate sn-glycerol 3-phosphate. Ala-138 contacts NADPH. Sn-glycerol 3-phosphate contacts are provided by Lys-189, Asp-242, Ser-252, Arg-253, and Asn-254. Lys-189 serves as the catalytic Proton acceptor. Arg-253 serves as a coordination point for NADPH. Positions 277 and 279 each coordinate NADPH.

This sequence belongs to the NAD-dependent glycerol-3-phosphate dehydrogenase family.

The protein resides in the cytoplasm. The enzyme catalyses sn-glycerol 3-phosphate + NAD(+) = dihydroxyacetone phosphate + NADH + H(+). It catalyses the reaction sn-glycerol 3-phosphate + NADP(+) = dihydroxyacetone phosphate + NADPH + H(+). Its pathway is membrane lipid metabolism; glycerophospholipid metabolism. Catalyzes the reduction of the glycolytic intermediate dihydroxyacetone phosphate (DHAP) to sn-glycerol 3-phosphate (G3P), the key precursor for phospholipid synthesis. The chain is Glycerol-3-phosphate dehydrogenase [NAD(P)+] from Halothermothrix orenii (strain H 168 / OCM 544 / DSM 9562).